The chain runs to 284 residues: MIDFLDVQASTPDIRISVDKVGIRRMKFPIKIGDEVAILSADLYIDIPQTRKGADMSRAVESIQSVLSRPSINLESLGIEICKEALGRFNYASRVEVKINGEYYKKSNGGYDEISLYIRTKCGIDGNIENLTGLSYEAITACPCAMETTRALISKDIPDSENVLYYIPTVTHNQRNRTKLIVSNNAGKISFWDIYKVLESVQGKPLESLLKRIDEGKLVYEAHKKPKFVEDVVREVAFAAVTLLPLSDDDMVIVSSDSEESIHPHNAYASMKKRALDLKKELNL.

This sequence belongs to the GTP cyclohydrolase IV family. Homodimer. The cofactor is Fe(2+).

It catalyses the reaction GTP + H2O = 7,8-dihydroneopterin 2',3'-cyclic phosphate + formate + diphosphate + H(+). It participates in cofactor biosynthesis; 5,6,7,8-tetrahydromethanopterin biosynthesis. In terms of biological role, converts GTP to 7,8-dihydro-D-neopterin 2',3'-cyclic phosphate, the first intermediate in the biosynthesis of coenzyme methanopterin. In Thermoplasma volcanium (strain ATCC 51530 / DSM 4299 / JCM 9571 / NBRC 15438 / GSS1), this protein is GTP cyclohydrolase MptA.